Here is a 142-residue protein sequence, read N- to C-terminus: MKIAIGADTDGFELKEHLKNYLKSKGIEVIDKTPEKGINLVKSASLVAQAVMNKEADRAVAIDEYGAGSFMVGAKHKGIICAEVSDEHSAKMTSQHNSANMLAIGAGIVGKRLAEGMLDAYIAEKYAGGRHQIRVDMLNKML.

This sequence belongs to the LacAB/RpiB family. In terms of assembly, heteromultimeric protein consisting of LacA and LacB.

It carries out the reaction aldehydo-D-galactose 6-phosphate = keto-D-tagatose 6-phosphate. It functions in the pathway carbohydrate metabolism; D-galactose 6-phosphate degradation; D-tagatose 6-phosphate from D-galactose 6-phosphate: step 1/1. The sequence is that of Galactose-6-phosphate isomerase subunit LacA from Clostridium acetobutylicum (strain ATCC 824 / DSM 792 / JCM 1419 / IAM 19013 / LMG 5710 / NBRC 13948 / NRRL B-527 / VKM B-1787 / 2291 / W).